Here is a 152-residue protein sequence, read N- to C-terminus: Ribonuclease HI (152 aa).

The region spanning 1 to 142 (MDSKVVIYTD…ADKLAVQGRE (142 aa)) is the RNase H type-1 domain. Mg(2+) is bound by residues Asp10, Glu48, Asp70, and Asp134.

It belongs to the RNase H family. In terms of assembly, monomer. Mg(2+) serves as cofactor.

Its subcellular location is the cytoplasm. It carries out the reaction Endonucleolytic cleavage to 5'-phosphomonoester.. Endonuclease that specifically degrades the RNA of RNA-DNA hybrids. The chain is Ribonuclease HI from Rickettsia conorii (strain ATCC VR-613 / Malish 7).